A 641-amino-acid chain; its full sequence is SH2 domain-containing protein A (641 aa).

Residues 355–384 form a disordered region; sequence VNGNGTSMEWRPQNHEEDNSSTDSENTEMR. In terms of domain architecture, SH2 spans 547 to 641; the sequence is WIEGFVTKEE…SRLGRIIRGI (95 aa).

Post-translationally, phosphorylated on tyrosine residues. Expressed in roots, leaves, stems and flowers.

The polypeptide is SH2 domain-containing protein A (Arabidopsis thaliana (Mouse-ear cress)).